The following is a 252-amino-acid chain: 3-dehydroquinate dehydratase (252 aa).

Residues S21, 46-48, and R82 each bind 3-dehydroquinate; that span reads EWR. The Proton donor/acceptor role is filled by H143. Catalysis depends on K170, which acts as the Schiff-base intermediate with substrate. Residues R213, S232, and Q236 each coordinate 3-dehydroquinate.

Belongs to the type-I 3-dehydroquinase family. In terms of assembly, homodimer.

It catalyses the reaction 3-dehydroquinate = 3-dehydroshikimate + H2O. It functions in the pathway metabolic intermediate biosynthesis; chorismate biosynthesis; chorismate from D-erythrose 4-phosphate and phosphoenolpyruvate: step 3/7. In terms of biological role, involved in the third step of the chorismate pathway, which leads to the biosynthesis of aromatic amino acids. Catalyzes the cis-dehydration of 3-dehydroquinate (DHQ) and introduces the first double bond of the aromatic ring to yield 3-dehydroshikimate. This Escherichia coli (strain 55989 / EAEC) protein is 3-dehydroquinate dehydratase.